Here is a 367-residue protein sequence, read N- to C-terminus: Heme A synthase (367 aa).

8 helical membrane-spanning segments follow: residues 26–46, 111–131, 139–159, 174–194, 212–232, 272–292, 305–325, and 327–347; these read IRGW…VGGA, LLAR…WVTG, LPLL…WWMV, LATH…IYRG, AAVI…VAGL, FVHR…MIAA, SVLL…TLLL, and VPIG…GFAI. A heme-binding site is contributed by His-274. His-335 contacts heme.

Belongs to the COX15/CtaA family. Type 2 subfamily. As to quaternary structure, interacts with CtaB. The cofactor is heme b.

It is found in the cell membrane. The catalysed reaction is Fe(II)-heme o + 2 A + H2O = Fe(II)-heme a + 2 AH2. It participates in porphyrin-containing compound metabolism; heme A biosynthesis; heme A from heme O: step 1/1. Catalyzes the conversion of heme O to heme A by two successive hydroxylations of the methyl group at C8. The first hydroxylation forms heme I, the second hydroxylation results in an unstable dihydroxymethyl group, which spontaneously dehydrates, resulting in the formyl group of heme A. The sequence is that of Heme A synthase from Sinorhizobium medicae (strain WSM419) (Ensifer medicae).